A 353-amino-acid chain; its full sequence is Photosystem II protein D1 (353 aa).

Thr-2 is modified (N-acetylthreonine). Thr-2 bears the Phosphothreonine mark. 3 helical membrane passes run 29–46 (YIGWFGVLMIPTLLTATS), 118–133 (HFFIGICSYMGREWEL), and 142–156 (WIAVAYSAPVAAATA). His-118 lines the chlorophyll a pocket. Tyr-126 provides a ligand contact to pheophytin a. [CaMn4O5] cluster-binding residues include Asp-170 and Glu-189. The helical transmembrane segment at 197–218 (FHMLGVAGVFGGSLFSAMHGSL) threads the bilayer. His-198 serves as a coordination point for chlorophyll a. A quinone-binding positions include His-215 and 264–265 (SF). A Fe cation-binding site is contributed by His-215. Fe cation is bound at residue His-272. The helical transmembrane segment at 274-288 (FLAIWPVMGIWFTAL) threads the bilayer. Positions 332, 333, 342, and 344 each coordinate [CaMn4O5] cluster. The propeptide occupies 345–353 (SVEAPSINA).

It belongs to the reaction center PufL/M/PsbA/D family. In terms of assembly, PSII is composed of 1 copy each of membrane proteins PsbA, PsbB, PsbC, PsbD, PsbE, PsbF, PsbH, PsbI, PsbJ, PsbK, PsbL, PsbM, PsbT, PsbX, PsbY, PsbZ, Psb30/Ycf12, at least 3 peripheral proteins of the oxygen-evolving complex and a large number of cofactors. It forms dimeric complexes. The D1/D2 heterodimer binds P680, chlorophylls that are the primary electron donor of PSII, and subsequent electron acceptors. It shares a non-heme iron and each subunit binds pheophytin, quinone, additional chlorophylls, carotenoids and lipids. D1 provides most of the ligands for the Mn4-Ca-O5 cluster of the oxygen-evolving complex (OEC). There is also a Cl(-1) ion associated with D1 and D2, which is required for oxygen evolution. The PSII complex binds additional chlorophylls, carotenoids and specific lipids. is required as a cofactor. Post-translationally, tyr-161 forms a radical intermediate that is referred to as redox-active TyrZ, YZ or Y-Z. In terms of processing, C-terminally processed by CTPA; processing is essential to allow assembly of the oxygen-evolving complex and thus photosynthetic growth.

The protein localises to the plastid. It localises to the chloroplast thylakoid membrane. It carries out the reaction 2 a plastoquinone + 4 hnu + 2 H2O = 2 a plastoquinol + O2. Functionally, photosystem II (PSII) is a light-driven water:plastoquinone oxidoreductase that uses light energy to abstract electrons from H(2)O, generating O(2) and a proton gradient subsequently used for ATP formation. It consists of a core antenna complex that captures photons, and an electron transfer chain that converts photonic excitation into a charge separation. The D1/D2 (PsbA/PsbD) reaction center heterodimer binds P680, the primary electron donor of PSII as well as several subsequent electron acceptors. This is Photosystem II protein D1 from Ostreococcus tauri.